A 271-amino-acid polypeptide reads, in one-letter code: NADH-quinone oxidoreductase subunit B (271 aa).

[4Fe-4S] cluster-binding residues include Cys-37, Cys-38, Cys-103, and Cys-132. A disordered region spans residues 227–271 (LAPPSVFGRAKRIPVDPKPSDEARAHGPGPTTESIGDVDGPDRGI). The segment covering 239–251 (IPVDPKPSDEARA) has biased composition (basic and acidic residues).

The protein belongs to the complex I 20 kDa subunit family. NDH-1 is composed of 14 different subunits. Subunits NuoB, C, D, E, F, and G constitute the peripheral sector of the complex. [4Fe-4S] cluster is required as a cofactor.

It is found in the cell membrane. It catalyses the reaction a quinone + NADH + 5 H(+)(in) = a quinol + NAD(+) + 4 H(+)(out). NDH-1 shuttles electrons from NADH, via FMN and iron-sulfur (Fe-S) centers, to quinones in the respiratory chain. The immediate electron acceptor for the enzyme in this species is believed to be a menaquinone. Couples the redox reaction to proton translocation (for every two electrons transferred, four hydrogen ions are translocated across the cytoplasmic membrane), and thus conserves the redox energy in a proton gradient. This is NADH-quinone oxidoreductase subunit B from Frankia casuarinae (strain DSM 45818 / CECT 9043 / HFP020203 / CcI3).